Reading from the N-terminus, the 272-residue chain is Universal stress protein MT2699 (272 aa).

ATP is bound by residues glycine 15, 109 to 115, and 123 to 124; these read GSVGIGR and ST.

This sequence belongs to the universal stress protein A family.

The polypeptide is Universal stress protein MT2699 (Mycobacterium tuberculosis (strain CDC 1551 / Oshkosh)).